The primary structure comprises 572 residues: Arginine--tRNA ligase (572 aa).

A 'HIGH' region motif is present at residues 122–132; the sequence is PNLAKEMHVGH.

The protein belongs to the class-I aminoacyl-tRNA synthetase family. In terms of assembly, monomer.

It is found in the cytoplasm. It catalyses the reaction tRNA(Arg) + L-arginine + ATP = L-arginyl-tRNA(Arg) + AMP + diphosphate. The protein is Arginine--tRNA ligase of Neisseria meningitidis serogroup A / serotype 4A (strain DSM 15465 / Z2491).